Consider the following 499-residue polypeptide: Trichoplein keratin filament-binding protein (499 aa).

A coiled-coil region spans residues 12-38 (SRVRTLEQQLVRQREQEARLRRQWEQH). 2 disordered regions span residues 46 to 78 (DVRSSKQAQWSSRQSFHRSMSAFQRDRMREEKQ) and 169 to 209 (VQQQ…EEEN). Residues 50–67 (SKQAQWSSRQSFHRSMSA) show a composition bias toward polar residues. Basic and acidic residues-rich tracts occupy residues 69 to 78 (QRDRMREEKQ) and 172 to 209 (QEKKQADERTQEEKQRFENEYERTRQEALERMRKEEEN). Coiled-coil stretches lie at residues 71 to 133 (DRMR…ERRK), 168 to 306 (QVQQ…ALLE), and 359 to 484 (WEKR…MIRQ). Positions 74-499 (REEKQRKLEE…IHSRPRSAWT (426 aa)) are interaction with keratin proteins. Positions 260–426 (KMMEESRRKT…RLTLRLEKEQ (167 aa)) are trichohyalin/plectin homology domain.

It belongs to the TCHP family.

The protein localises to the cytoplasm. It localises to the cytoskeleton. It is found in the microtubule organizing center. The protein resides in the centrosome. In terms of biological role, may act as a 'capping' or 'branching' protein for keratin filaments in the cell periphery. May regulate K8/K18 filament and desmosome organization mainly at the apical or peripheral regions of simple epithelial cells. This Danio rerio (Zebrafish) protein is Trichoplein keratin filament-binding protein.